The chain runs to 223 residues: Cytidylate kinase (223 aa).

An ATP-binding site is contributed by 10 to 18 (GPAGAGKST).

Belongs to the cytidylate kinase family. Type 1 subfamily.

Its subcellular location is the cytoplasm. It catalyses the reaction CMP + ATP = CDP + ADP. The enzyme catalyses dCMP + ATP = dCDP + ADP. In Exiguobacterium sibiricum (strain DSM 17290 / CCUG 55495 / CIP 109462 / JCM 13490 / 255-15), this protein is Cytidylate kinase.